Here is a 364-residue protein sequence, read N- to C-terminus: Phospho-N-acetylmuramoyl-pentapeptide-transferase (364 aa).

Transmembrane regions (helical) follow at residues serine 18–leucine 38, leucine 48–valine 68, glycine 91–tryptophan 111, leucine 114–isoleucine 134, leucine 154–alanine 174, glycine 183–alanine 203, valine 214–alanine 234, asparagine 237–histidine 257, alanine 280–valine 300, and threonine 343–serine 363.

This sequence belongs to the glycosyltransferase 4 family. MraY subfamily. Mg(2+) is required as a cofactor.

The protein localises to the cell inner membrane. It catalyses the reaction UDP-N-acetyl-alpha-D-muramoyl-L-alanyl-gamma-D-glutamyl-meso-2,6-diaminopimeloyl-D-alanyl-D-alanine + di-trans,octa-cis-undecaprenyl phosphate = di-trans,octa-cis-undecaprenyl diphospho-N-acetyl-alpha-D-muramoyl-L-alanyl-D-glutamyl-meso-2,6-diaminopimeloyl-D-alanyl-D-alanine + UMP. It participates in cell wall biogenesis; peptidoglycan biosynthesis. Functionally, catalyzes the initial step of the lipid cycle reactions in the biosynthesis of the cell wall peptidoglycan: transfers peptidoglycan precursor phospho-MurNAc-pentapeptide from UDP-MurNAc-pentapeptide onto the lipid carrier undecaprenyl phosphate, yielding undecaprenyl-pyrophosphoryl-MurNAc-pentapeptide, known as lipid I. The polypeptide is Phospho-N-acetylmuramoyl-pentapeptide-transferase (Rippkaea orientalis (strain PCC 8801 / RF-1) (Cyanothece sp. (strain PCC 8801))).